An 840-amino-acid chain; its full sequence is V-type proton ATPase 116 kDa subunit a 4 (840 aa).

The Cytoplasmic portion of the chain corresponds to 1 to 390 (MVSVFRSEEM…DAYGVGSYRE (390 aa)). A helical membrane pass occupies residues 391–409 (INPAPYTIITFPFLFAVMF). Residues 410–411 (GD) are Vacuolar-facing. The chain crosses the membrane as a helical span at residues 412-428 (CGHGTVMLLAALWMILN). Residues 429–443 (ERRLLSQKTDNEIWN) lie on the Cytoplasmic side of the membrane. The helical transmembrane segment at 444–473 (TFFHGRYLILLMGIFSIYTGLIYNDCFSKS) threads the bilayer. Topologically, residues 474–538 (LNIFGSSWSV…ASNKLTFLNS (65 aa)) are vacuolar. Residues 539–558 (YKMKMSVILGIVQMVFGVIL) form a helical membrane-spanning segment. The Cytoplasmic portion of the chain corresponds to 559-576 (SLFNHIYFRRTLNIILQF). Residues 577–597 (IPEMIFILCLFGYLVFMIIFK) traverse the membrane as a helical segment. The Vacuolar portion of the chain corresponds to 598 to 642 (WCCFDVHVSQHAPSILIHFINMFLFNYSDSSNAPLYKHQQEVQSF). The helical transmembrane segment at 643–662 (FVVMALISVPWMLLIKPFIL) threads the bilayer. Residues 663-727 (RASHRKSQLQ…DVFVHQAIHT (65 aa)) are Cytoplasmic-facing. The tract at residues 675–704 (RIQEDATENIEGDSSSPSSRSGQRTSADTH) is disordered. Residues 728–752 (IEYCLGCISNTASYLRLWALSLAHA) form a helical membrane-spanning segment. At 753–773 (QLSEVLWTMVMNSGLQTRGWG) the chain is on the vacuolar side. A helical transmembrane segment spans residues 774–812 (GIVGVFIIFAVFAVLTVAILLIMEGLSAFLHALRLHWVE). Topologically, residues 813 to 840 (FQNKFYVGDGYKFSPFSFKHILDGTAEE) are cytoplasmic.

Belongs to the V-ATPase 116 kDa subunit family. V-ATPase is a heteromultimeric enzyme made up of two complexes: the ATP-hydrolytic V1 complex and the proton translocation V0 complex. The V1 complex consists of three catalytic AB heterodimers that form a heterohexamer, three peripheral stalks each consisting of EG heterodimers, one central rotor including subunits D and F, and the regulatory subunits C and H. The proton translocation complex V0 consists of the proton transport subunit a, a ring of proteolipid subunits c9c'', rotary subunit d, subunits e and f, and the accessory subunits ATP6AP1/Ac45 and ATP6AP2/PRR. Interacts with the V1 complex V-ATPase subunit A ATP6V1A. Interacts with the V0 complex V-ATPase subunit c ATP6V0C. As to expression, expressed in adult and fetal kidney. Found in the inner ear.

The protein resides in the apical cell membrane. Its subcellular location is the basolateral cell membrane. In terms of biological role, subunit of the V0 complex of vacuolar(H+)-ATPase (V-ATPase), a multisubunit enzyme composed of a peripheral complex (V1) that hydrolyzes ATP and a membrane integral complex (V0) that translocates protons. V-ATPase is responsible for acidifying and maintaining the pH of intracellular compartments and in some cell types, is targeted to the plasma membrane, where it is responsible for acidifying the extracellular environment. Involved in normal vectorial acid transport into the urine by the kidney. The sequence is that of V-type proton ATPase 116 kDa subunit a 4 (ATP6V0A4) from Homo sapiens (Human).